Consider the following 2326-residue polypeptide: Probable voltage-dependent N-type calcium channel subunit alpha-1B (2326 aa).

Topologically, residues 1 to 83 are cytoplasmic; sequence MARLGNDVPA…DNIIRKYAKR (83 aa). The segment at 17–37 is disordered; the sequence is AGGGRGANRHAGPQAGQRGMY. An I repeat occupies 75-351; sequence NIIRKYAKRI…LVLGVLSGEF (277 aa). Residues 84–107 form a helical membrane-spanning segment; it reads ITEWPPFEYMILATIIANCIVLAL. Topologically, residues 108–124 are extracellular; that stretch reads EQHLPDGDKTPMSERLD. The helical transmembrane segment at 125-145 threads the bilayer; sequence DTEPYFIGIFCFEAGIKIIAL. At 146-156 the chain is on the cytoplasmic side; it reads GFAFHKGSYLR. A helical membrane pass occupies residues 157 to 175; sequence NGWNVMDFVVVLTGILTTI. The Extracellular segment spans residues 176 to 180; that stretch reads GTDFD. Residues 181–204 form a helical membrane-spanning segment; sequence LRTLRAVRVLRPLKLVSGIPSLQV. At 205-214 the chain is on the cytoplasmic side; sequence VLKSIMKAMV. Residues 215-237 form a helical membrane-spanning segment; sequence PLLQIGLLLFFAILMFAIIGLEF. Over 238 to 323 the chain is Extracellular; it reads YMGKFHKTCF…TANDALGNTW (86 aa). N-linked (GlcNAc...) asparagine glycosylation occurs at Asn271. The helical transmembrane segment at 324–348 threads the bilayer; sequence NWLYFIPLIVIGSFFMLNLVLGVLS. Over 349-472 the chain is Cytoplasmic; it reads GEFAKERERV…FFIRRMVKSQ (124 aa). The binding to the beta subunit stretch occupies residues 371 to 388; that stretch reads QQVEQEFNRYLRWIHIAE. The II repeat unit spans residues 458 to 702; it reads EKRFRFFIRR…VFLAIAVDNL (245 aa). The chain crosses the membrane as a helical span at residues 473-491; the sequence is SFYWIVLCLVGLNTLCVAI. Residues 492–501 lie on the Extracellular side of the membrane; the sequence is VHYDQPPLLT. The chain crosses the membrane as a helical span at residues 502–524; sequence DALYFAEFVFLGLFLTEMSLKMY. Residues 525-534 are Cytoplasmic-facing; it reads GLGPRNYFHS. Ser534 is a binding site for a 1,2-diacyl-sn-glycero-3-phospho-(1D-myo-inositol-4,5-bisphosphate). The chain crosses the membrane as a helical span at residues 535–556; the sequence is SFNCFDFGVIVGSIFEVVWTAV. Residues 557–563 lie on the Extracellular side of the membrane; that stretch reads KPDTSFG. The chain crosses the membrane as a helical span at residues 564-576; the sequence is ISVLRALRLLRIF. 2 residues coordinate a 1,2-diacyl-sn-glycero-3-phospho-(1D-myo-inositol-4,5-bisphosphate): Arg574 and Lys577. At 577-594 the chain is on the cytoplasmic side; the sequence is KVTKYWNSLRNLVVSLLN. A helical membrane pass occupies residues 595 to 620; the sequence is SMKSIISLLFLLFLFIVVFALLGMQL. Topologically, residues 621–672 are extracellular; the sequence is FGGQFNFEDGTPPTNFDTFPAAILTVFQILTGEDWNEVMYYGIEAHGGVKKG. The helical transmembrane segment at 673 to 699 threads the bilayer; that stretch reads MFSSVYFIILTLFGNYTLLNVFLAIAV. Over 700–1148 the chain is Cytoplasmic; sequence DNLANAQELT…ACHYIVNLRY (449 aa). The tract at residues 793–1048 is disordered; that stretch reads SHQIRPDMKT…LQHLPQQPED (256 aa). Composition is skewed to basic and acidic residues over residues 796–808, 854–879, 886–908, 935–979, and 994–1011; these read IRPDMKTHLDRPL, KLGEQDKGDGALDTGEPRANSKDDKR, SKETEKERDEKGRKGERSRSHEG, HGTE…EGAE, and SEEKREIGEKERETVLRE. The span at 1020 to 1032 shows a compositional bias: polar residues; the sequence is TQPSQDSGTQGNV. The III repeat unit spans residues 1134–1416; it reads NPVRRACHYI…IFVALIIITF (283 aa). A helical transmembrane segment spans residues 1149–1167; that stretch reads FEMCILLVITMSSIALAAE. At 1168–1175 the chain is on the extracellular side; the sequence is DPVQGDAP. The helical transmembrane segment at 1176–1200 threads the bilayer; sequence RNNVLKYLDYVFTGVFTFEMVIKMI. Residues 1201-1214 lie on the Cytoplasmic side of the membrane; that stretch reads NLGLILHPGSYFRD. A helical transmembrane segment spans residues 1215–1235; sequence LWNILDFIVVSGALVAFAFTG. The Extracellular segment spans residues 1236–1241; sequence SRGKDL. Residues 1242–1262 traverse the membrane as a helical segment; sequence NTIKSLRVLRVLRPLKTIKRL. The Cytoplasmic segment spans residues 1263–1280; sequence PKLKAVFDCVVNSLKNVL. Residues 1281–1300 traverse the membrane as a helical segment; the sequence is NILIVYMLFMFIFAVIAVQL. Topologically, residues 1301–1387 are extracellular; sequence FKGKFFYCTD…DQGPSPSYRM (87 aa). A helical membrane pass occupies residues 1388–1413; the sequence is EMSIFYVVYFVVFPFFFVNIFVALII. Residues 1414-1468 are Cytoplasmic-facing; that stretch reads ITFQEQGDKVMSDCSLEKNERACIDFAISAKPLTRYMPQNKQTFQYKMWKFVVSP. Residues 1453 to 1708 form an IV repeat; sequence NKQTFQYKMW…LFVAVIMDNF (256 aa). A helical transmembrane segment spans residues 1469 to 1487; the sequence is PFEYLIMALIALNTIVLMM. Residues 1488-1495 lie on the Extracellular side of the membrane; it reads KFYNAPDP. A helical transmembrane segment spans residues 1496–1520; it reads YDRMLQYLNILFTFLFSMECVLKLI. Residues 1521-1530 lie on the Cytoplasmic side of the membrane; the sequence is GFGVLNYFRD. A helical transmembrane segment spans residues 1531 to 1552; the sequence is AWNVFDFVTVLGSITDILVTEL. The Extracellular segment spans residues 1553–1558; that stretch reads ADSFIN. Asn1558 carries an N-linked (GlcNAc...) asparagine glycan. A helical membrane pass occupies residues 1559-1577; it reads LSFLRLFRAARLIKLLRQG. Residues 1578–1596 lie on the Cytoplasmic side of the membrane; it reads YTIRILLWTFVQSFKALPY. Residues 1597–1616 form a helical membrane-spanning segment; that stretch reads VCLLIAMLFFIYAIIGMQVF. Over 1617–1680 the chain is Extracellular; sequence GNIELDDDGA…IDGDECGSNF (64 aa). The chain crosses the membrane as a helical span at residues 1681–1704; sequence AYFYFVSFIFFSSFLMLNLFVAVI. The Cytoplasmic portion of the chain corresponds to 1705–2326; sequence MDNFEYLTRD…YRETDEDDWC (622 aa). Positions 1721-1756 constitute an EF-hand domain; that stretch reads HHLDEFIRVWAEYDPGARGRITYNDMYEMLRHMCPP. 3 residues coordinate Ca(2+): Asp1734, Arg1740, and Asp1745. Polar residues predominate over residues 1897-1912; it reads EEPSSYSTSHKNSVNP. Disordered regions lie at residues 1897-1916, 1932-1954, 2039-2242, and 2271-2326; these read EEPSSYSTSHKNSVNPLYQG, CAEGKKEVPESHPEEAGVTKSSS, PHHH…SSDP, and TTAT…DDWC. The span at 1932–1948 shows a compositional bias: basic and acidic residues; it reads CAEGKKEVPESHPEEAG. Over residues 2039 to 2055 the composition is skewed to basic residues; it reads PHHHHHHHRCHHRREKK. Basic and acidic residues-rich tracts occupy residues 2056–2069 and 2077–2104; these read QRSLERATNRHADE and QLRDQSSKERERGRSQERRPPSSAEKQR. Composition is skewed to polar residues over residues 2142–2161, 2275–2289, and 2302–2311; these read GSGSVNDSPLQSASGSSTPS, GRSPRTSSFTTQPPQ, and GRSTGPSTAA.

Belongs to the calcium channel alpha-1 subunit (TC 1.A.1.11) family. As to quaternary structure, multisubunit complex consisting of alpha-1, alpha-2, beta and delta subunits in a 1:1:1:1 ratio. The channel activity is directed by the pore-forming and voltage-sensitive alpha-1 subunit. In many cases, this subunit is sufficient to generate voltage-sensitive calcium channel activity. The auxiliary subunits beta and alpha-2/delta linked by a disulfide bridge regulate the channel activity. Post-translationally, phosphorylated in vitro by CaM-kinase II, PKA, PKC and CGPK. As to expression, expression is higher in the electric lobe than in the forebrain.

Its subcellular location is the membrane. The isoform alpha-1B gives rise to N-type calcium currents. N-type calcium channels belong to the 'high-voltage activated' (HVA) group. The sequence is that of Probable voltage-dependent N-type calcium channel subunit alpha-1B from Diplobatis ommata (Ocellated electric ray).